The chain runs to 212 residues: Uracil phosphoribosyltransferase (212 aa).

Residues Arg78, Arg103, and 130-138 (DPMLATGSS) each bind 5-phospho-alpha-D-ribose 1-diphosphate. Uracil contacts are provided by residues Ile193 and 198–200 (GDA). Asp199 serves as a coordination point for 5-phospho-alpha-D-ribose 1-diphosphate.

Belongs to the UPRTase family. It depends on Mg(2+) as a cofactor.

The catalysed reaction is UMP + diphosphate = 5-phospho-alpha-D-ribose 1-diphosphate + uracil. It functions in the pathway pyrimidine metabolism; UMP biosynthesis via salvage pathway; UMP from uracil: step 1/1. With respect to regulation, allosterically activated by GTP. Catalyzes the conversion of uracil and 5-phospho-alpha-D-ribose 1-diphosphate (PRPP) to UMP and diphosphate. The protein is Uracil phosphoribosyltransferase of Pseudomonas fluorescens (strain ATCC BAA-477 / NRRL B-23932 / Pf-5).